The chain runs to 64 residues: uncharacterized protein (64 aa).

A helical transmembrane segment spans residues 33-55; the sequence is YTPLGSYMIFGIVHYFCSYHIGI.

The protein localises to the membrane. This is an uncharacterized protein from Saccharomyces cerevisiae (strain ATCC 204508 / S288c) (Baker's yeast).